The chain runs to 296 residues: Nucleotide-binding protein Pnec_1620 (296 aa).

An ATP-binding site is contributed by 8-15 (GISGSGKS). 57-60 (DARR) lines the GTP pocket.

This sequence belongs to the RapZ-like family.

Displays ATPase and GTPase activities. The chain is Nucleotide-binding protein Pnec_1620 from Polynucleobacter necessarius subsp. necessarius (strain STIR1).